Reading from the N-terminus, the 628-residue chain is E3 SUMO-protein ligase PIAS3 (628 aa).

The interval M1–S200 is interaction with CCAR2. Residues V11–L45 enclose the SAP domain. The LXXLL motif motif lies at L19–L23. Glycyl lysine isopeptide (Lys-Gly) (interchain with G-Cter in SUMO2) cross-links involve residues K46, K56, K230, and K307. Positions M115 to L280 constitute a PINIT domain. An SP-RING-type zinc finger spans residues P312 to D393. Residues C343, H345, C366, and C369 each contribute to the Zn(2+) site. Residues L450–D460 form an SUMO1-binding region. Residues K466 and K482 each participate in a glycyl lysine isopeptide (Lys-Gly) (interchain with G-Cter in SUMO2) cross-link. Residues G571–D628 form a disordered region.

It belongs to the PIAS family. Monomer. Interacts with PLAG1 and ZFHX3. Interacts with STAT5A; the interaction occurs on stimulation by PRL. Binds SUMO1 and UBE2I. Interacts with AR, BCL11A, HMGA2, IRF1 and NCOA2. Interacts with MITF; the interaction inhibits the transcriptional activity of MITF. Interacts with STAT3; the interaction occurs on stimulation by IL6, CNTF or OSM and inhibits the DNA binding activity of STAT3. Interacts with GFI1; the interaction relieves the inhibitory effect of PIAS3 on STAT3-mediated transcriptional activity. Interacts with MTA1. Interacts with CCAR2 (via N-terminus). Interacts with TRIM8. Interacts with PRDM1. In terms of processing, sumoylated. Expressed in kidney, heart, spleen, brain and cerebellum; weak expression, if any, in liver and lung.

It localises to the cytoplasm. Its subcellular location is the nucleus. The protein localises to the nucleus speckle. It functions in the pathway protein modification; protein sumoylation. Functionally, functions as an E3-type small ubiquitin-like modifier (SUMO) ligase, stabilizing the interaction between UBE2I and the substrate, and as a SUMO-tethering factor. Plays a crucial role as a transcriptional coregulation in various cellular pathways, including the STAT pathway and the steroid hormone signaling pathway. Repressor of STAT3 signaling via inhibiting STAT3 DNA-binding and suppressing cell growth. Repressor of MITF transcriptional activity. Enhances the sumoylation of MTA1 and may participate in its paralog-selective sumoylation. Sumoylates CCAR2 which promotes its interaction with SIRT1. Diminishes the sumoylation of ZFHX3 by preventing the colocalization of ZFHX3 with SUMO1 in the nucleus. This Mus musculus (Mouse) protein is E3 SUMO-protein ligase PIAS3 (Pias3).